The following is a 117-amino-acid chain: Nuclear transition protein 2 (117 aa).

Residues 1–117 (MDTKMQSLPT…KRRSSGRRYK (117 aa)) form a disordered region. The segment covering 7–26 (SLPTTHPHPHSSSRPQSHTS) has biased composition (low complexity). 8 residues coordinate Zn(2+): His12, His14, His16, His24, Cys32, Cys34, Cys38, and Cys41. Over residues 44-53 (AGHAGSSSSP) the composition is skewed to low complexity. 2 stretches are compositionally biased toward basic residues: residues 60–77 (KHPK…RPSH) and 93–117 (SKRK…RRYK). Positions 90 to 98 (GKVSKRKAV) match the Nuclear localization signal motif. Residue Ser112 is modified to Phosphoserine.

Belongs to the nuclear transition protein 2 family.

It is found in the nucleus. It localises to the chromosome. Its function is as follows. Plays a key role in the replacement of histones to protamine in the elongating spermatids of mammals. In condensing spermatids, loaded onto the nucleosomes, where it promotes the recruitment and processing of protamines, which are responsible for histone eviction. The histone H2AB1-H2BC1/TH2B dimer is required for loading of TNP2 onto chromatin. This chain is Nuclear transition protein 2, found in Mus musculus (Mouse).